The sequence spans 99 residues: Large ribosomal subunit protein uL23 (99 aa).

Belongs to the universal ribosomal protein uL23 family. In terms of assembly, part of the 50S ribosomal subunit. Contacts protein L29, and trigger factor when it is bound to the ribosome.

Its function is as follows. One of the early assembly proteins it binds 23S rRNA. One of the proteins that surrounds the polypeptide exit tunnel on the outside of the ribosome. Forms the main docking site for trigger factor binding to the ribosome. This is Large ribosomal subunit protein uL23 from Lachnospira eligens (strain ATCC 27750 / DSM 3376 / VPI C15-48 / C15-B4) (Eubacterium eligens).